Reading from the N-terminus, the 293-residue chain is Probable porphobilinogen deaminase (293 aa).

Cys-233 is modified (S-(dipyrrolylmethanemethyl)cysteine).

Belongs to the HMBS family. Requires dipyrromethane as cofactor.

The catalysed reaction is 4 porphobilinogen + H2O = hydroxymethylbilane + 4 NH4(+). Its pathway is porphyrin-containing compound metabolism; protoporphyrin-IX biosynthesis; coproporphyrinogen-III from 5-aminolevulinate: step 2/4. In terms of biological role, tetrapolymerization of the monopyrrole PBG into the hydroxymethylbilane pre-uroporphyrinogen in several discrete steps. The polypeptide is Probable porphobilinogen deaminase (Saccharolobus islandicus (strain Y.N.15.51 / Yellowstone #2) (Sulfolobus islandicus)).